The sequence spans 271 residues: D-methionine-binding lipoprotein MetQ (271 aa).

The signal sequence occupies residues 1–22; it reads MAFKFKTFAAVGALIGSLALVG. The N-palmitoyl cysteine moiety is linked to residue Cys-23. The S-diacylglycerol cysteine moiety is linked to residue Cys-23.

Belongs to the NlpA lipoprotein family.

Its subcellular location is the cell membrane. Its function is as follows. This protein is a component of a D-methionine permease, a binding protein-dependent, ATP-driven transport system. The sequence is that of D-methionine-binding lipoprotein MetQ (metQ) from Escherichia coli O157:H7.